The following is a 365-amino-acid chain: Iron-sulfur cluster assembly protein SufC (365 aa).

In terms of domain architecture, ABC transporter spans 118 to 364 (LEINDLHAIE…ESDGYAQFVE (247 aa)). 152–159 (GRNGSGKS) is a binding site for ATP.

It belongs to the ABC transporter superfamily. Ycf16 family. As to quaternary structure, component of a complex composed of SufB, SufC and SufD in a stoichiometric ratio of 1:2:1. Interacts with SufB. Interacts with SufD; the interaction enhances the ATPase activity of SufC.

The protein localises to the plastid. The protein resides in the apicoplast. It carries out the reaction ATP + H2O = ADP + phosphate + H(+). It functions in the pathway cofactor biosynthesis; iron-sulfur cluster biosynthesis. Its function is as follows. Participates in the sulfur mobilization (SUF) pathway for iron-sulfur (Fe-S) cluster biogenesis. As part of a complex consisting of SufB-SufC(2)-SufD, involved in assembly of [4Fe-4S] clusters. Exhibits ATPase activity. In Plasmodium berghei (strain Anka), this protein is Iron-sulfur cluster assembly protein SufC.